Here is a 308-residue protein sequence, read N- to C-terminus: uncharacterized protein (308 aa).

The signal sequence occupies residues 1 to 28; the sequence is MILMKKFEIILFLFIAVLIFVFGYFVGA.

This is an uncharacterized protein from Methanocaldococcus jannaschii (strain ATCC 43067 / DSM 2661 / JAL-1 / JCM 10045 / NBRC 100440) (Methanococcus jannaschii).